The following is a 166-amino-acid chain: Ribosome maturation factor RimM (166 aa).

Positions glycine 94–leucine 166 constitute a PRC barrel domain.

This sequence belongs to the RimM family. In terms of assembly, binds ribosomal protein uS19.

Its subcellular location is the cytoplasm. Its function is as follows. An accessory protein needed during the final step in the assembly of 30S ribosomal subunit, possibly for assembly of the head region. Essential for efficient processing of 16S rRNA. May be needed both before and after RbfA during the maturation of 16S rRNA. It has affinity for free ribosomal 30S subunits but not for 70S ribosomes. The protein is Ribosome maturation factor RimM of Syntrophus aciditrophicus (strain SB).